Here is a 250-residue protein sequence, read N- to C-terminus: MELISIPALSDNYIWLLCDENRHVVIVDPAESQPVLDTLESRGWIPDAILLTHHHHDHVGGVPGIIDRFPELLVYGPAETQSKGATIIVCGGDSINFGHFSFQIIDVPGHTLGHIAFYQAPYLFCGDTLFSGGCGRLFEGTAEQMYTSIGKIAELPDDTLICCAHEYTISNMKFAHAVLPNQTISEYQQKVIRMRENNQPTIPTTLQTEKKINIFLKCDDIDLQRNIGITPNSQPLSAVFHQLRRQKDQF.

His53, His55, Asp57, His58, His110, Asp127, and His165 together coordinate Zn(2+).

This sequence belongs to the metallo-beta-lactamase superfamily. Glyoxalase II family. In terms of assembly, monomer. Zn(2+) serves as cofactor.

It catalyses the reaction an S-(2-hydroxyacyl)glutathione + H2O = a 2-hydroxy carboxylate + glutathione + H(+). It participates in secondary metabolite metabolism; methylglyoxal degradation; (R)-lactate from methylglyoxal: step 2/2. Its function is as follows. Thiolesterase that catalyzes the hydrolysis of S-D-lactoyl-glutathione to form glutathione and D-lactic acid. In Photorhabdus laumondii subsp. laumondii (strain DSM 15139 / CIP 105565 / TT01) (Photorhabdus luminescens subsp. laumondii), this protein is Hydroxyacylglutathione hydrolase.